The primary structure comprises 459 residues: N,N-dimethyl phenylurea N-demethylase subunit alpha (459 aa).

In terms of domain architecture, Rieske spans 55–166 (WVFVAHETEI…VESYHGFIFT (112 aa)). Residues C97, H99, C117, and H120 each contribute to the [2Fe-2S] cluster site. H225, H230, and D386 together coordinate Fe cation.

This sequence belongs to the bacterial ring-hydroxylating dioxygenase alpha subunit family. As to quaternary structure, pdmA (subunit alpha) and PdmB (subunit beta) form the oxygenase component of a bacterial Rieske non-heme iron oxygenase (RO) system. [2Fe-2S] cluster serves as cofactor. It depends on Fe cation as a cofactor.

The enzyme catalyses a 1,1-dimethyl-3-phenylurea + 2 reduced [2Fe-2S]-[ferredoxin] + O2 + 2 H(+) = a 1-methyl-3-phenylurea + formaldehyde + 2 oxidized [2Fe-2S]-[ferredoxin] + H2O. It carries out the reaction isoproturon + 2 reduced [2Fe-2S]-[ferredoxin] + O2 + 2 H(+) = 1-methyl-3-[4-(propan-2-yl)phenyl]urea + formaldehyde + 2 oxidized [2Fe-2S]-[ferredoxin] + H2O. The catalysed reaction is chlorotoluron + 2 reduced [2Fe-2S]-[ferredoxin] + O2 + 2 H(+) = 3-(3-chloro-4-methylphenyl)-1-methylurea + formaldehyde + 2 oxidized [2Fe-2S]-[ferredoxin] + H2O. It catalyses the reaction metoxuron + 2 reduced [2Fe-2S]-[ferredoxin] + O2 + 2 H(+) = 3-(3-chloro-4-methoxylphenyl)-1-methylurea + formaldehyde + 2 oxidized [2Fe-2S]-[ferredoxin] + H2O. The enzyme catalyses monuron + 2 reduced [2Fe-2S]-[ferredoxin] + O2 + 2 H(+) = 3-(4-chlorophenyl)-1-methylurea + formaldehyde + 2 oxidized [2Fe-2S]-[ferredoxin] + H2O. It carries out the reaction diuron + 2 reduced [2Fe-2S]-[ferredoxin] + O2 + 2 H(+) = 3-(3,4-dichlorophenyl)-1-methylurea + formaldehyde + 2 oxidized [2Fe-2S]-[ferredoxin] + H2O. The catalysed reaction is fluometuron + 2 reduced [2Fe-2S]-[ferredoxin] + O2 + 2 H(+) = 3-[3-(trifluoromethyl)phenyl]-1-methylurea + formaldehyde + 2 oxidized [2Fe-2S]-[ferredoxin] + H2O. It catalyses the reaction fenuron + 2 reduced [2Fe-2S]-[ferredoxin] + O2 + 2 H(+) = 1-methyl-3-phenylurea + formaldehyde + 2 oxidized [2Fe-2S]-[ferredoxin] + H2O. The protein operates within xenobiotic degradation. Its activity is regulated as follows. Activity is stimulated in vitro by coexpression of a [3Fe-4S]-type ferredoxin. In terms of biological role, part of the multicomponent N,N-dimethyl phenylurea N-demethylase responsible for the initial N-demethylation step during the bacterial metabolism of N,N-dimethyl-substituted phenylurea herbicides. Catalyzes the mono-N-demethylation of N,N-dimethyl-substituted phenylurea herbicides to their mono-N-demethylated derivatives. Is active on isoproturon (IPU), chlorotoluron, metoxuron, monoron, diuron, fluometuron and fenuron, but cannot transform the N-methoxy-N-methyl-substituted herbicides. In Sphingobium sp. (strain YBL2), this protein is N,N-dimethyl phenylurea N-demethylase subunit alpha.